The chain runs to 208 residues: Small ribosomal subunit protein uS4 (208 aa).

The region spanning 98–161 (RRLDNVVYRL…RKSKRFKEVF (64 aa)) is the S4 RNA-binding domain.

It belongs to the universal ribosomal protein uS4 family. As to quaternary structure, part of the 30S ribosomal subunit. Contacts protein S5. The interaction surface between S4 and S5 is involved in control of translational fidelity.

In terms of biological role, one of the primary rRNA binding proteins, it binds directly to 16S rRNA where it nucleates assembly of the body of the 30S subunit. Functionally, with S5 and S12 plays an important role in translational accuracy. The chain is Small ribosomal subunit protein uS4 from Halothermothrix orenii (strain H 168 / OCM 544 / DSM 9562).